Reading from the N-terminus, the 305-residue chain is NADH-ubiquinone oxidoreductase chain 1 (305 aa).

A run of 8 helical transmembrane segments spans residues 3–23 (WVAVIVSIIPFVGVLLAVGFY), 71–91 (VGPFILAPALMLAISLLGWLL), 99–119 (VFYVFGVILFMVITSVSVYGV), 145–165 (YEIPMGFIFFCVVLCSGVFMF), 175–195 (LFFFFLPLCVVMLVWMLCMLA), 221–241 (GGGFAVMFIAEYSSILLSSVM), 246–266 (FFGGNEALVGFFMMVFAIFFV), and 285–305 (WTVLLCVMLTASVCVVVLVGV).

This sequence belongs to the complex I subunit 1 family.

Its subcellular location is the mitochondrion inner membrane. It carries out the reaction a ubiquinone + NADH + 5 H(+)(in) = a ubiquinol + NAD(+) + 4 H(+)(out). Core subunit of the mitochondrial membrane respiratory chain NADH dehydrogenase (Complex I) that is believed to belong to the minimal assembly required for catalysis. Complex I functions in the transfer of electrons from NADH to the respiratory chain. The immediate electron acceptor for the enzyme is believed to be ubiquinone. In Mytilus edulis (Blue mussel), this protein is NADH-ubiquinone oxidoreductase chain 1 (ND1).